The primary structure comprises 320 residues: Atrochrysone carboxyl ACP thioesterase (320 aa).

Residues H103, H105, D107, and H108 each contribute to the Zn(2+) site. Residue D107 is the Proton donor/acceptor of the active site.

This sequence belongs to the metallo-beta-lactamase superfamily. Requires Zn(2+) as cofactor.

It carries out the reaction atrochrysone carboxyl-[ACP] + H2O = atrochrysone carboxylate + holo-[ACP] + H(+). Its pathway is secondary metabolite biosynthesis. Functionally, atrochrysone carboxyl ACP thioesterase; part of the gene cluster that mediates the biosynthesis of geodin, an intermediate in the biosynthesis of other natural products. The pathway begins with the synthesis of atrochrysone thioester by the polyketide synthase (PKS) gedC. The atrochrysone carboxyl ACP thioesterase gedB then breaks the thioester bond and releases the atrochrysone carboxylic acid from gedC. The atrochrysone carboxylic acid is then converted to atrochrysone which is further transformed into emodinanthrone. The next step is performed by the emodinanthrone oxygenase gedH that catalyzes the oxidation of emodinanthrone to emodin. Emodin O-methyltransferase encoded probably by gedA then catalyzes methylation of the 8-hydroxy group of emodin to form questin. Ring cleavage of questin by questin oxidase gedK leads to desmethylsulochrin via several intermediates including questin epoxide. Another methylation step probably catalyzed by methyltransferase gedG leads to the formation of sulochrin which is further converted to dihydrogeodin by the sulochrin halogenase gedL. Finally, the dihydrogeodin oxidase gedJ catalyzes the stereospecific phenol oxidative coupling reaction converting dihydrogeodin to geodin. This chain is Atrochrysone carboxyl ACP thioesterase, found in Aspergillus terreus (strain NIH 2624 / FGSC A1156).